The following is a 433-amino-acid chain: Glucose-6-phosphate isomerase (433 aa).

Glutamate 285 functions as the Proton donor in the catalytic mechanism. Residues histidine 306 and lysine 421 contribute to the active site.

The protein belongs to the GPI family.

It is found in the cytoplasm. The enzyme catalyses alpha-D-glucose 6-phosphate = beta-D-fructose 6-phosphate. Its pathway is carbohydrate biosynthesis; gluconeogenesis. The protein operates within carbohydrate degradation; glycolysis; D-glyceraldehyde 3-phosphate and glycerone phosphate from D-glucose: step 2/4. Functionally, catalyzes the reversible isomerization of glucose-6-phosphate to fructose-6-phosphate. The protein is Glucose-6-phosphate isomerase of Mycoplasma mobile (strain ATCC 43663 / 163K / NCTC 11711) (Mesomycoplasma mobile).